The chain runs to 636 residues: Chitin synthase VI (636 aa).

4 consecutive transmembrane segments (helical) span residues 23–43 (LQWFAFWSFSILLTVPWLFCI), 374–394 (TIRTTALLFFVMVLALLTTTA), 399–419 (LPVGFMAVSLGLNWLLMLYFG), and 427–447 (IWFYPLMFVLNPLFNWYYMVY). The interval 595-636 (QRLRLEQRPRTGPSLNARWQNGPQASETSQGRSQVDDVGIAF) is disordered. A compositionally biased stretch (polar residues) spans 607–627 (PSLNARWQNGPQASETSQGRS).

The protein belongs to the chitin synthase family. Class VI subfamily. Moderately expressed during appressorium formation.

It is found in the cell membrane. The catalysed reaction is [(1-&gt;4)-N-acetyl-beta-D-glucosaminyl](n) + UDP-N-acetyl-alpha-D-glucosamine = [(1-&gt;4)-N-acetyl-beta-D-glucosaminyl](n+1) + UDP + H(+). Its function is as follows. Polymerizes chitin, a structural polymer of the cell wall and septum, by transferring the sugar moiety of UDP-GlcNAc to the non-reducing end of the growing chitin polymer. Contributes to the production of conidia but is the only chitine synthase that does not contribute to the ability of fungal conidia to germinate. Involved in fungal stress tolerances. This Metarhizium acridum (strain CQMa 102) protein is Chitin synthase VI.